The primary structure comprises 499 residues: Lysine--tRNA ligase (499 aa).

Mg(2+)-binding residues include Glu-408 and Glu-415.

The protein belongs to the class-II aminoacyl-tRNA synthetase family. As to quaternary structure, homodimer. Requires Mg(2+) as cofactor.

It is found in the cytoplasm. It catalyses the reaction tRNA(Lys) + L-lysine + ATP = L-lysyl-tRNA(Lys) + AMP + diphosphate. The sequence is that of Lysine--tRNA ligase from Agrobacterium fabrum (strain C58 / ATCC 33970) (Agrobacterium tumefaciens (strain C58)).